We begin with the raw amino-acid sequence, 597 residues long: MDHIRNFSIIAHIDHGKSTLADRIIQICGGLSDREMESQVLDSMDLERERGITIKAQTAALTYKARDGQVYNLNMIDTPGHVDFSYEVSRSLSACEGALLVVDASQGVEAQTVANCYTAIELGVDVIPVLNKIDLPAANPENAIAEIEDVIGIDATDATRCSAKTGLGVEDVLEALVAKVPPPKGDPEAPLQALIIDSWFDNYVGVVMLVRIVNGTLRPKDKIRMMATGAQYPVEHIGVFTPKSKNLESLSAGQVGFIIAGIKELAAAKVGDTVTLVNRPAAEPLPGFKEVKPQVFAGLYPVEANQYDALRDSLEKLKLNDASLMYEPEVSQALGFGFRCGFLGLLHMEIVQERLEREFDMDLITTAPTVVYEVLQRDGTTIMVENPAKMPEPSKIEEVREPIVTVNLYMPQDYVGSVITLCTQKRGTQINMQYHGRQVQLTYEIPMGEVVLDFFDRLKSISRGYASMDYEFKEYRAADVVKVDMLINGDKVDALSVIVHRSQSQYRGREVASKMRELIPRQMYDVAIQATIGANIIARENIKALRKNVLAKCYGGDISRKKKLLEKQKAGKKRMKQVGSVEIPQEAFLAILRVEDK.

The tr-type G domain occupies 2 to 184 (DHIRNFSIIA…ALVAKVPPPK (183 aa)). GTP-binding positions include 14 to 19 (DHGKST) and 131 to 134 (NKID).

This sequence belongs to the TRAFAC class translation factor GTPase superfamily. Classic translation factor GTPase family. LepA subfamily.

It localises to the cell inner membrane. The catalysed reaction is GTP + H2O = GDP + phosphate + H(+). Functionally, required for accurate and efficient protein synthesis under certain stress conditions. May act as a fidelity factor of the translation reaction, by catalyzing a one-codon backward translocation of tRNAs on improperly translocated ribosomes. Back-translocation proceeds from a post-translocation (POST) complex to a pre-translocation (PRE) complex, thus giving elongation factor G a second chance to translocate the tRNAs correctly. Binds to ribosomes in a GTP-dependent manner. This Paraburkholderia xenovorans (strain LB400) protein is Elongation factor 4.